The following is a 238-amino-acid chain: Ciliary microtubule associated protein 1B (238 aa).

The stretch at 182–207 (PGPCAYHVVNPMIYKTRAPQFTMLGR) is one STPGR repeat. Residues 206 to 238 (GRTLPPRENTKKPGPASYSVDKVVWSRGSRGRG) form a disordered region.

The protein belongs to the CIMAP family.

The protein localises to the cell projection. The protein resides in the cilium. It localises to the flagellum. The sequence is that of Ciliary microtubule associated protein 1B (Cimap1b) from Mus musculus (Mouse).